Consider the following 175-residue polypeptide: MSSFLYTVTSFFILDSSKGERVIAKYYNNDFDTLQKQKAFEKKVFDKTSKVNFGGEITLLDNYLVVYKSFSNIIIYMVGDQNQNEIALLYVLNSFIDTLQNLFENSQINKKLILDGINYTLLTLDEIIDGGIIMESDSAVIADRVGIKAPDNDDLDESINKAVTSVKEQLFNFLK.

Belongs to the adaptor complexes small subunit family. In terms of assembly, oligomeric complex that consists of at least the alpha, beta, beta', gamma, delta, epsilon and zeta subunits.

The protein resides in the cytoplasm. The protein localises to the golgi apparatus membrane. It is found in the cytoplasmic vesicle. It localises to the COPI-coated vesicle membrane. The coatomer is a cytosolic protein complex that binds to dilysine motifs and reversibly associates with Golgi non-clathrin-coated vesicles, which further mediate biosynthetic protein transport from the ER, via the Golgi up to the trans Golgi network. Coatomer complex is required for budding from Golgi membranes, and is essential for the retrograde Golgi-to-ER transport of dilysine-tagged proteins. The zeta subunit may be involved in regulating the coat assembly and, hence, the rate of biosynthetic protein transport due to its association-dissociation properties with the coatomer complex. This Dictyostelium discoideum (Social amoeba) protein is Probable coatomer subunit zeta-A (copZa).